A 516-amino-acid chain; its full sequence is Ribose import ATP-binding protein RbsA (516 aa).

2 ABC transporter domains span residues 14 to 250 and 261 to 504; these read LRLT…VGRA and AKGA…AGIG. 46 to 53 is a binding site for ATP; the sequence is GENGAGKS.

Belongs to the ABC transporter superfamily. Ribose importer (TC 3.A.1.2.1) family. The complex is composed of an ATP-binding protein (RbsA), two transmembrane proteins (RbsC) and a solute-binding protein (RbsB).

Its subcellular location is the cell inner membrane. It catalyses the reaction D-ribose(out) + ATP + H2O = D-ribose(in) + ADP + phosphate + H(+). Its function is as follows. Part of the ABC transporter complex RbsABC involved in ribose import. Responsible for energy coupling to the transport system. This is Ribose import ATP-binding protein RbsA from Jannaschia sp. (strain CCS1).